The following is a 236-amino-acid chain: Small ribosomal subunit protein uS2c (236 aa).

Belongs to the universal ribosomal protein uS2 family.

The protein resides in the plastid. The sequence is that of Small ribosomal subunit protein uS2c (rps2) from Cuscuta obtusiflora (Peruvian dodder).